The primary structure comprises 309 residues: HPr kinase/phosphorylase (309 aa).

Residues His-138 and Lys-159 contribute to the active site. 153–160 contacts ATP; the sequence is GDSGIGKS. A Mg(2+)-binding site is contributed by Ser-160. Asp-177 functions as the Proton acceptor; for phosphorylation activity. Proton donor; for dephosphorylation activity in the catalytic mechanism. Positions 201–210 are important for the catalytic mechanism of both phosphorylation and dephosphorylation; it reads LEIRGVGIID. Mg(2+) is bound at residue Glu-202. Arg-243 is an active-site residue. The tract at residues 264 to 269 is important for the catalytic mechanism of dephosphorylation; the sequence is PVKTGR.

It belongs to the HPrK/P family. As to quaternary structure, homohexamer. Requires Mg(2+) as cofactor.

It carries out the reaction [HPr protein]-L-serine + ATP = [HPr protein]-O-phospho-L-serine + ADP + H(+). The catalysed reaction is [HPr protein]-O-phospho-L-serine + phosphate + H(+) = [HPr protein]-L-serine + diphosphate. Functionally, catalyzes the ATP- as well as the pyrophosphate-dependent phosphorylation of a specific serine residue in HPr, a phosphocarrier protein of the phosphoenolpyruvate-dependent sugar phosphotransferase system (PTS). HprK/P also catalyzes the pyrophosphate-producing, inorganic phosphate-dependent dephosphorylation (phosphorolysis) of seryl-phosphorylated HPr (P-Ser-HPr). The two antagonistic activities of HprK/P are regulated by several intracellular metabolites, which change their concentration in response to the absence or presence of rapidly metabolisable carbon sources (glucose, fructose, etc.) in the growth medium. Therefore, by controlling the phosphorylation state of HPr, HPrK/P is a sensor enzyme that plays a major role in the regulation of carbon metabolism and sugar transport: it mediates carbon catabolite repression (CCR), and regulates PTS-catalyzed carbohydrate uptake and inducer exclusion. The polypeptide is HPr kinase/phosphorylase (Streptococcus thermophilus (strain CNRZ 1066)).